We begin with the raw amino-acid sequence, 315 residues long: Eukaryotic translation initiation factor 2 subunit 1 (315 aa).

Residues 17–88 (DDVVMVNVRS…DKGYIDLSKR (72 aa)) form the S1 motif domain. 2 positions are modified to phosphoserine: Ser-49 and Ser-52. The segment at 292 to 315 (RLEKENAEVDGDDDAEEMEAKTED) is disordered. Residues 299-308 (EVDGDDDAEE) show a composition bias toward acidic residues.

This sequence belongs to the eIF-2-alpha family. In terms of assembly, eukaryotic translation initiation factor 2 eIF2 is a heterotrimeric complex composed of an alpha, a beta and a gamma subunit. Post-translationally, phosphorylation at Ser-49 and Ser-52 stabilizes the eIF-2/GDP/eIF2B complex and prevents GDP/GTP exchange reaction, thus impairing the recycling of eIF-2 between successive rounds of initiation and leading to global inhibition of translation, while concomitantly initiating the preferential translation of integrated stress response (ISR)-specific mRNAs.

The protein localises to the cytoplasm. It is found in the stress granule. Its subcellular location is the cytosol. Its activity is regulated as follows. Activity is regulated by phosphorylation at Ser-49 and Ser-52, which stabilizes the eIF-2/GDP/eIF2B complex and prevents the eIF2B-mediated exchange of GDP for GTP, thereby preventing the formation of the 43S pre-initiation complex (PIC). This results in the global attenuation of 5' cap-dependent protein synthesis and concomitant translation of ISR-specific mRNAs that contain a short upstream open reading frame (uORF) in their 5' UTR. Functions in the early steps of protein synthesis by forming a ternary complex with GTP and initiator tRNA. This complex binds to a 40S ribosomal subunit, followed by mRNA binding to form a 43S pre-initiation complex. Junction of the 60S ribosomal subunit to form the 80S initiation complex is preceded by hydrolysis of the GTP bound to eIF-2 and release of an eIF-2-GDP binary complex. In order for eIF-2 to recycle and catalyze another round of initiation, the GDP bound to eIF-2 must exchange with GTP by way of a reaction catalyzed by eIF2B. EIF2S1/eIF2-alpha is a key component of the integrated stress response (ISR), required for adaptation to various stress: phosphorylation by metabolic-stress sensing protein kinases in response to stress converts EIF2S1/eIF-2-alpha in a global protein synthesis inhibitor, leading to a attenuation of cap-dependent translation, while concomitantly initiating the preferential translation of ISR-specific mRNAs, such as the transcriptional activators ATF4 and QRICH1. The polypeptide is Eukaryotic translation initiation factor 2 subunit 1 (eif2s1) (Xenopus tropicalis (Western clawed frog)).